Reading from the N-terminus, the 109-residue chain is Large ribosomal subunit protein uL24 (109 aa).

Residues 85 to 109 form a disordered region; the sequence is KYGTDPKTNKKVRLSRKTNNLVGGQ.

Belongs to the universal ribosomal protein uL24 family. As to quaternary structure, part of the 50S ribosomal subunit.

Its function is as follows. One of two assembly initiator proteins, it binds directly to the 5'-end of the 23S rRNA, where it nucleates assembly of the 50S subunit. One of the proteins that surrounds the polypeptide exit tunnel on the outside of the subunit. In Mycoplasmoides gallisepticum (strain R(low / passage 15 / clone 2)) (Mycoplasma gallisepticum), this protein is Large ribosomal subunit protein uL24.